Reading from the N-terminus, the 350-residue chain is Anthranilate phosphoribosyltransferase (350 aa).

Residues Gly-94, 97-98, Thr-102, 104-107, 122-130, and Ser-134 each bind 5-phospho-alpha-D-ribose 1-diphosphate; these read GD, NVST, and KHGNRSVSS. Gly-94 serves as a coordination point for anthranilate. Ser-106 serves as a coordination point for Mg(2+). Asn-125 is a binding site for anthranilate. Anthranilate is bound at residue Arg-180. Residues Asp-239 and Glu-240 each coordinate Mg(2+).

It belongs to the anthranilate phosphoribosyltransferase family. In terms of assembly, homodimer. Mg(2+) serves as cofactor.

It catalyses the reaction N-(5-phospho-beta-D-ribosyl)anthranilate + diphosphate = 5-phospho-alpha-D-ribose 1-diphosphate + anthranilate. It participates in amino-acid biosynthesis; L-tryptophan biosynthesis; L-tryptophan from chorismate: step 2/5. Its function is as follows. Catalyzes the transfer of the phosphoribosyl group of 5-phosphorylribose-1-pyrophosphate (PRPP) to anthranilate to yield N-(5'-phosphoribosyl)-anthranilate (PRA). The chain is Anthranilate phosphoribosyltransferase from Pelobacter propionicus (strain DSM 2379 / NBRC 103807 / OttBd1).